Here is a 204-residue protein sequence, read N- to C-terminus: Large ribosomal subunit protein mL67 (204 aa).

This sequence belongs to the mitochondrion-specific ribosomal protein mL67 family.

The protein localises to the nucleus. It is found in the mitochondrion. Functionally, transcription factor involved in regulation of RNA polymerase II-dependent transcription. Also involved in regulation of mitochondrial DNA recombination, maintenance and repair, and generation of homoplasmic cells. In Yarrowia lipolytica (strain CLIB 122 / E 150) (Yeast), this protein is Large ribosomal subunit protein mL67 (MHR1).